A 350-amino-acid polypeptide reads, in one-letter code: Glycerol-1-phosphate dehydrogenase [NAD(P)+] (350 aa).

NAD(+)-binding positions include 94–98 (GKPID) and 116–119 (TVAS). Asp-121 provides a ligand contact to substrate. Ser-125 is a binding site for NAD(+). Asp-168 provides a ligand contact to substrate. Asp-168 and His-248 together coordinate Zn(2+). A substrate-binding site is contributed by His-252. His-264 is a Zn(2+) binding site.

This sequence belongs to the glycerol-1-phosphate dehydrogenase family. It depends on Zn(2+) as a cofactor.

The protein resides in the cytoplasm. The enzyme catalyses sn-glycerol 1-phosphate + NAD(+) = dihydroxyacetone phosphate + NADH + H(+). The catalysed reaction is sn-glycerol 1-phosphate + NADP(+) = dihydroxyacetone phosphate + NADPH + H(+). It participates in membrane lipid metabolism; glycerophospholipid metabolism. Catalyzes the NAD(P)H-dependent reduction of dihydroxyacetonephosphate (DHAP or glycerone phosphate) to glycerol 1-phosphate (G1P). The G1P thus generated is used as the glycerophosphate backbone of phospholipids in the cellular membranes of Archaea. The protein is Glycerol-1-phosphate dehydrogenase [NAD(P)+] of Halorubrum lacusprofundi (strain ATCC 49239 / DSM 5036 / JCM 8891 / ACAM 34).